We begin with the raw amino-acid sequence, 170 residues long: Zinc finger protein 576 (170 aa).

A disordered region spans residues Met-1–Cys-29. A compositionally biased stretch (basic and acidic residues) spans Glu-8–Ser-20. C2H2-type zinc fingers lie at residues Pro-34–His-57, Phe-71–His-93, Phe-112–His-134, and Phe-143–His-165.

This sequence belongs to the krueppel C2H2-type zinc-finger protein family.

It is found in the nucleus. Its function is as follows. May be involved in transcriptional regulation. This is Zinc finger protein 576 (ZNF576) from Homo sapiens (Human).